A 147-amino-acid polypeptide reads, in one-letter code: Large ribosomal subunit protein uL11 (147 aa).

It belongs to the universal ribosomal protein uL11 family. Part of the ribosomal stalk of the 50S ribosomal subunit. Interacts with L10 and the large rRNA to form the base of the stalk. L10 forms an elongated spine to which L12 dimers bind in a sequential fashion forming a multimeric L10(L12)X complex. In terms of processing, one or more lysine residues are methylated.

Forms part of the ribosomal stalk which helps the ribosome interact with GTP-bound translation factors. This is Large ribosomal subunit protein uL11 from Bacteroides thetaiotaomicron (strain ATCC 29148 / DSM 2079 / JCM 5827 / CCUG 10774 / NCTC 10582 / VPI-5482 / E50).